The sequence spans 270 residues: Diaminopimelate epimerase (270 aa).

Asparagine 15, glutamine 49, and asparagine 66 together coordinate substrate. Cysteine 75 serves as the catalytic Proton donor. Residues 76–77 (GN), asparagine 155, asparagine 187, and 204–205 (ER) contribute to the substrate site. Cysteine 213 serves as the catalytic Proton acceptor. 214-215 (GS) contributes to the substrate binding site.

The protein belongs to the diaminopimelate epimerase family. In terms of assembly, homodimer.

The protein resides in the cytoplasm. It catalyses the reaction (2S,6S)-2,6-diaminopimelate = meso-2,6-diaminopimelate. It participates in amino-acid biosynthesis; L-lysine biosynthesis via DAP pathway; DL-2,6-diaminopimelate from LL-2,6-diaminopimelate: step 1/1. In terms of biological role, catalyzes the stereoinversion of LL-2,6-diaminopimelate (L,L-DAP) to meso-diaminopimelate (meso-DAP), a precursor of L-lysine and an essential component of the bacterial peptidoglycan. The chain is Diaminopimelate epimerase from Rickettsia rickettsii (strain Iowa).